The following is a 293-amino-acid chain: Protein Pat (293 aa).

Positions 187-287 (LPDIILNPLD…LLLRTRQDRA (101 aa)) constitute a BEN domain.

Interacts with poc1b. As to expression, an mRNA and protein component of germ plasm and primordial germ cells (PGCs) throughout oogenesis and early development, being first localized to the granulo-fibrillar material (GFM) of the mitochondrial cloud in stage I and II oocytes and to the periphery of mature germinal granules both in oocytes and in embryos. Shows some somatic expression including the ectodermal cells of tailbud embryos. In adults, only expressed in ovaries.

The protein localises to the cytoplasm. It is found in the nucleus. Functionally, probably plays a role in germ plasm formation, positioning and maintenance. The polypeptide is Protein Pat (Xenopus laevis (African clawed frog)).